Reading from the N-terminus, the 1447-residue chain is Regulator of G-protein signaling 12 (1447 aa).

The tract at residues 1 to 21 is disordered; sequence MFRAGEASKRPLPGPSPPRVR. A PDZ domain is found at 22-98; the sequence is SVEVARGRAG…GVLHMVIAEG (77 aa). Serine 172 and serine 195 each carry phosphoserine. A Glycyl lysine isopeptide (Lys-Gly) (interchain with G-Cter in SUMO2) cross-link involves residue lysine 196. Residues 228 to 340 enclose the PID domain; it reads VAMIVGYLGS…GALRTSCHVF (113 aa). Disordered stretches follow at residues 410–429 and 443–482; these read ADAHQNNSTSSNSDSGIGNF and LGGSSSRHGPGGSAWDGVGGRGAQPWGAPWTGPFCPDPEG. Polar residues predominate over residues 413–425; the sequence is HQNNSTSSNSDSG. The segment covering 451–464 has biased composition (gly residues); it reads GPGGSAWDGVGGRG. Omega-N-methylarginine occurs at positions 524 and 633. The tract at residues 618-652 is disordered; the sequence is NVRKTKEDKKGSKFGRGTGLTQPSQRTSARRSFGR. 2 positions are modified to phosphoserine: serine 661 and serine 671. Residues 715–832 form the RGS domain; that stretch reads SFERLLQDPV…LKSPLYQECI (118 aa). Polar residues predominate over residues 843–853; the sequence is DSQQVPSSPAS. Residues 843 to 941 are disordered; that stretch reads DSQQVPSSPA…RESQGSVSSA (99 aa). Residues serine 850 and serine 879 each carry the phosphoserine modification. Basic and acidic residues predominate over residues 914 to 923; that stretch reads EHGDHADDAL. Phosphoserine is present on serine 943. RBD domains lie at 962–1032 and 1034–1104; these read KHCC…LEKR and LFRL…LEEK. Basic and acidic residues predominate over residues 1103–1117; that stretch reads EKDPSRGKASADKQK. Residues 1103 to 1169 are disordered; the sequence is EKDPSRGKAS…RDPRLSKREE (67 aa). Positions 1122-1136 are enriched in polar residues; the sequence is KQNTAVNSSSRNHSA. Residues 1151–1169 are compositionally biased toward basic and acidic residues; that stretch reads IKGENGKNARDPRLSKREE. Positions 1187-1209 constitute a GoLoco domain; that stretch reads AEEFFELISKAQSNRADDQRGLL. The segment at 1240–1447 is disordered; sequence GFSKRSATGN…KTSAHHATFV (208 aa). The span at 1244–1258 shows a compositional bias: polar residues; it reads RSATGNGRESASQPG. Low complexity-rich tracts occupy residues 1267-1280 and 1289-1298; these read SSDSPSTSPGSASS and PPGQKSPSGP. Residues 1301–1313 are compositionally biased toward polar residues; the sequence is TPQSPVSLAQEGT.

Interacts with GNAI1. Interacts with GNAI2 and GNAI3; the interactions are GDP-dependent. In terms of tissue distribution, isoform 3 is brain specific.

The protein resides in the nucleus. It localises to the cytoplasm. The protein localises to the cell projection. Its subcellular location is the dendrite. It is found in the synapse. The protein resides in the nucleus matrix. Regulates G protein-coupled receptor signaling cascades. Inhibits signal transduction by increasing the GTPase activity of G protein alpha subunits, thereby driving them into their inactive GDP-bound form. Functionally, behaves as a cell cycle-dependent transcriptional repressor, promoting inhibition of S-phase DNA synthesis. The protein is Regulator of G-protein signaling 12 (RGS12) of Homo sapiens (Human).